Consider the following 361-residue polypeptide: ATP phosphoribosyltransferase regulatory subunit (361 aa).

It belongs to the class-II aminoacyl-tRNA synthetase family. HisZ subfamily. In terms of assembly, heteromultimer composed of HisG and HisZ subunits.

It localises to the cytoplasm. Its pathway is amino-acid biosynthesis; L-histidine biosynthesis; L-histidine from 5-phospho-alpha-D-ribose 1-diphosphate: step 1/9. Required for the first step of histidine biosynthesis. May allow the feedback regulation of ATP phosphoribosyltransferase activity by histidine. This Thermus thermophilus (strain ATCC 27634 / DSM 579 / HB8) protein is ATP phosphoribosyltransferase regulatory subunit.